The sequence spans 476 residues: Bifunctional protein HldE (476 aa).

Residues 1–318 (MKVTLPDFRR…ENAIRGRAET (318 aa)) are ribokinase. Residue 195-198 (NLSE) coordinates ATP. The active site involves D264. The cytidylyltransferase stretch occupies residues 344–476 (MTNGIFDILH…IIQSIKNGRG (133 aa)).

The protein in the N-terminal section; belongs to the carbohydrate kinase PfkB family. It in the C-terminal section; belongs to the cytidylyltransferase family. In terms of assembly, homodimer.

The enzyme catalyses D-glycero-beta-D-manno-heptose 7-phosphate + ATP = D-glycero-beta-D-manno-heptose 1,7-bisphosphate + ADP + H(+). It catalyses the reaction D-glycero-beta-D-manno-heptose 1-phosphate + ATP + H(+) = ADP-D-glycero-beta-D-manno-heptose + diphosphate. It functions in the pathway nucleotide-sugar biosynthesis; ADP-L-glycero-beta-D-manno-heptose biosynthesis; ADP-L-glycero-beta-D-manno-heptose from D-glycero-beta-D-manno-heptose 7-phosphate: step 1/4. The protein operates within nucleotide-sugar biosynthesis; ADP-L-glycero-beta-D-manno-heptose biosynthesis; ADP-L-glycero-beta-D-manno-heptose from D-glycero-beta-D-manno-heptose 7-phosphate: step 3/4. Catalyzes the phosphorylation of D-glycero-D-manno-heptose 7-phosphate at the C-1 position to selectively form D-glycero-beta-D-manno-heptose-1,7-bisphosphate. Its function is as follows. Catalyzes the ADP transfer from ATP to D-glycero-beta-D-manno-heptose 1-phosphate, yielding ADP-D-glycero-beta-D-manno-heptose. The chain is Bifunctional protein HldE from Yersinia pseudotuberculosis serotype O:1b (strain IP 31758).